Here is a 327-residue protein sequence, read N- to C-terminus: Aldo-keto reductase family 1 member A1 (327 aa).

NADP(+)-binding positions include 13–22 (GQKIPLIGLG), Thr23, Trp24, and Asp47. The Proton donor role is filled by Tyr52. NADP(+) contacts are provided by Ser164, Asn165, Ser213, Leu215, Ser217, Lys265, Ser266, Val267, Thr268, Arg271, Gln274, and Asn275.

The protein belongs to the aldo/keto reductase family.

The protein resides in the cytoplasm. It is found in the cytosol. It localises to the apical cell membrane. It catalyses the reaction a primary alcohol + NADP(+) = an aldehyde + NADPH + H(+). It carries out the reaction S-nitroso-CoA + NADPH + H(+) = sulfinamide-CoA + NADP(+). The catalysed reaction is S-nitrosoglutathione + NADPH + H(+) = S-(hydroxysulfenamide)glutathione + NADP(+). Its function is as follows. Catalyzes the NADPH-dependent reduction of a wide variety of carbonyl-containing compounds to their corresponding alcohols. Displays enzymatic activity towards endogenous metabolites such as aromatic and aliphatic aldehydes, ketones, monosaccharides and bile acids. Acts as an aldehyde-detoxification enzyme. Also acts as an inhibitor of protein S-nitrosylation by mediating degradation of S-nitroso-coenzyme A (S-nitroso-CoA), a cofactor required to S-nitrosylate proteins. Also acts as a S-nitroso-glutathione reductase by catalyzing the NADPH-dependent reduction of S-nitrosoglutathione. Displays no reductase activity towards retinoids. The polypeptide is Aldo-keto reductase family 1 member A1 (akr1a1) (Xenopus tropicalis (Western clawed frog)).